A 400-amino-acid chain; its full sequence is Leucine-rich repeat flightless-interacting protein 2 (400 aa).

2 disordered regions span residues 1 to 28 and 53 to 119; these read MGTPGSGRKRTPVKDRFSAEDEALSNID and LERQ…LSEV. Residue Ser18 is modified to Phosphoserine. Positions 29–71 form a coiled coil; the sequence is REAEARLAAKRAARAEARDIRMRELERQQKELDEKSDKQYAEN. The segment covering 53-68 has biased composition (basic and acidic residues); sequence LERQQKELDEKSDKQY. Over residues 73–102 the composition is skewed to polar residues; it reads TRPSSRNSASATTPLSGNSSRRVSGDTSSL. Phosphoserine is present on residues Ser77, Ser80, Ser88, Ser92, and Ser96. A Phosphothreonine modification is found at Thr99. Phosphoserine occurs at positions 100 and 101. Coiled coils occupy residues 106–202 and 245–393; these read DTSL…LIEK and LDVR…KANR.

The protein belongs to the LRRFIP family. As to quaternary structure, interacts with DVL3 and FLII. Weakly interacts with MYD88 in resting cells. Following LPS-stimulation, the interaction with MYD88 is rapidly enhanced; the complex gradually dissociates to basal levels after 6 hours of stimulation. Interaction with MYD88 is regulated by LPS-induced phosphorylation. In the presence of LPS, competes with FLII for MYD88-binding.

Its function is as follows. May function as activator of the canonical Wnt signaling pathway, in association with DVL3, upstream of CTNNB1/beta-catenin. Positively regulates Toll-like receptor (TLR) signaling in response to agonist probably by competing with the negative FLII regulator for MYD88-binding. This is Leucine-rich repeat flightless-interacting protein 2 (LRRFIP2) from Bos taurus (Bovine).